A 336-amino-acid chain; its full sequence is MSRVTLSRYLIEQTRSHNTPADLRFLIEVVARACKEISHAVSKGALGGVLGSMGTENVQGEVQKKLDVMSNEILLEANEWAGNLAGMASEEMDHPYQIPGRYPKGAYLLVFDPLDGSSNIDVNVSVGTIFSVLRCPNEYLNQNDTLREEAFLQPGTTQVAAGYAIYGPQTMLMLTLGNGVKGFTLDRELGSFVLTHDNISVPESTAEFAINMSNQRHWEAPVKRYVEELLAGKEGPLGKNYNMRWIASMVADVHRILTRGGVFMYPRDAREPEKPGKLRLMYEANPMSFIIEQAGGAATNGTQRILDIKPENLHQRVAVFLGSKQEVERITGYHAE.

4 residues coordinate Mg(2+): glutamate 90, aspartate 112, leucine 114, and aspartate 115. Substrate contacts are provided by residues 115–118 (DGSS), asparagine 211, and lysine 277. Glutamate 283 lines the Mg(2+) pocket.

The protein belongs to the FBPase class 1 family. In terms of assembly, homotetramer. It depends on Mg(2+) as a cofactor.

The protein localises to the cytoplasm. It carries out the reaction beta-D-fructose 1,6-bisphosphate + H2O = beta-D-fructose 6-phosphate + phosphate. The protein operates within carbohydrate biosynthesis; gluconeogenesis. In Pseudomonas aeruginosa (strain ATCC 15692 / DSM 22644 / CIP 104116 / JCM 14847 / LMG 12228 / 1C / PRS 101 / PAO1), this protein is Fructose-1,6-bisphosphatase class 1.